The following is a 469-amino-acid chain: Phenylalanine--tRNA ligase, mitochondrial (469 aa).

A mitochondrion-targeting transit peptide spans 1-17 (MFLNRMMKTRTGLYRLY). Residues 126–129 (SAHE), Arg155, 162–164 (THY), 169–171 (QME), Glu302, and Phe329 contribute to the substrate site. An FDX-ACB domain is found at 372–469 (SKHPGSFRDV…LVKEYSVELR (98 aa)).

Belongs to the class-II aminoacyl-tRNA synthetase family. In terms of assembly, monomer.

The protein resides in the mitochondrion matrix. It carries out the reaction tRNA(Phe) + L-phenylalanine + ATP = L-phenylalanyl-tRNA(Phe) + AMP + diphosphate + H(+). Functionally, is responsible for the charging of tRNA(Phe) with phenylalanine in mitochondrial translation. In Saccharomyces cerevisiae (strain ATCC 204508 / S288c) (Baker's yeast), this protein is Phenylalanine--tRNA ligase, mitochondrial (MSF1).